The sequence spans 622 residues: Chaperone protein DnaK (622 aa).

At T197 the chain carries Phosphothreonine; by autocatalysis. Composition is skewed to basic and acidic residues over residues 515–528 (LHKE…EAVE) and 575–614 (ASKE…KKDD). 2 disordered regions span residues 515–537 (LHKE…DSLV) and 575–622 (ASKE…AEVE).

It belongs to the heat shock protein 70 family.

In terms of biological role, acts as a chaperone. The sequence is that of Chaperone protein DnaK from Campylobacter lari (strain RM2100 / D67 / ATCC BAA-1060).